The sequence spans 492 residues: Adenosylhomocysteinase-like 2 (492 aa).

The interval 43–64 is disordered; it reads FTGSSDEEDVSPKDNHQRNSAG. 2 residues coordinate substrate: Asp-192 and Glu-217. Residue 218 to 220 participates in NAD(+) binding; sequence SVT. Residues Lys-247 and Asp-251 each contribute to the substrate site. NAD(+) is bound by residues 283-288, Glu-304, 360-362, Asn-407, Lys-486, 486-490, and Tyr-490; these read GDVGKG, MGH, and KANYY.

The protein belongs to the adenosylhomocysteinase family. The cofactor is NAD(+).

Might play a role in the regulation of methionine metabolism. The protein is Adenosylhomocysteinase-like 2 of Drosophila melanogaster (Fruit fly).